Here is a 1064-residue protein sequence, read N- to C-terminus: Error-prone DNA polymerase (1064 aa).

The protein belongs to the DNA polymerase type-C family. DnaE2 subfamily.

It is found in the cytoplasm. The enzyme catalyses DNA(n) + a 2'-deoxyribonucleoside 5'-triphosphate = DNA(n+1) + diphosphate. DNA polymerase involved in damage-induced mutagenesis and translesion synthesis (TLS). It is not the major replicative DNA polymerase. The chain is Error-prone DNA polymerase from Azoarcus sp. (strain BH72).